The chain runs to 311 residues: 4-diphosphocytidyl-2-C-methyl-D-erythritol kinase (311 aa).

The active site involves lysine 9. Residue 95–105 (PLGAGLAGGST) participates in ATP binding. Aspartate 137 is an active-site residue.

It belongs to the GHMP kinase family. IspE subfamily.

It catalyses the reaction 4-CDP-2-C-methyl-D-erythritol + ATP = 4-CDP-2-C-methyl-D-erythritol 2-phosphate + ADP + H(+). It functions in the pathway isoprenoid biosynthesis; isopentenyl diphosphate biosynthesis via DXP pathway; isopentenyl diphosphate from 1-deoxy-D-xylulose 5-phosphate: step 3/6. Its function is as follows. Catalyzes the phosphorylation of the position 2 hydroxy group of 4-diphosphocytidyl-2C-methyl-D-erythritol. The chain is 4-diphosphocytidyl-2-C-methyl-D-erythritol kinase from Thermosynechococcus vestitus (strain NIES-2133 / IAM M-273 / BP-1).